A 291-amino-acid chain; its full sequence is Probable 2-(5''-triphosphoribosyl)-3'-dephosphocoenzyme-A synthase (291 aa).

This sequence belongs to the CitG/MdcB family.

It catalyses the reaction 3'-dephospho-CoA + ATP = 2'-(5''-triphospho-alpha-D-ribosyl)-3'-dephospho-CoA + adenine. Functionally, involved in the formation of 2-(5''-phosphoribosyl)-3'-dephosphocoenzyme-A, the prosthetic group of the acyl-carrier protein of the malonate decarboxylase. This chain is Probable 2-(5''-triphosphoribosyl)-3'-dephosphocoenzyme-A synthase, found in Pseudomonas syringae pv. syringae (strain B728a).